The following is a 94-amino-acid chain: ATP-dependent Clp protease adapter protein ClpS (94 aa).

It belongs to the ClpS family. As to quaternary structure, binds to the N-terminal domain of the chaperone ClpA.

Functionally, involved in the modulation of the specificity of the ClpAP-mediated ATP-dependent protein degradation. The chain is ATP-dependent Clp protease adapter protein ClpS from Thermosynechococcus vestitus (strain NIES-2133 / IAM M-273 / BP-1).